We begin with the raw amino-acid sequence, 214 residues long: Thymidylate kinase (214 aa).

10–17 contacts ATP; sequence GGEGAGKS.

This sequence belongs to the thymidylate kinase family.

The enzyme catalyses dTMP + ATP = dTDP + ADP. In terms of biological role, phosphorylation of dTMP to form dTDP in both de novo and salvage pathways of dTTP synthesis. This Brucella canis (strain ATCC 23365 / NCTC 10854 / RM-666) protein is Thymidylate kinase.